The following is an 85-amino-acid chain: Large ribosomal subunit protein bL27 (85 aa).

Gly residues predominate over residues 1–10; that stretch reads MAQKKGGGST. The tract at residues 1–20 is disordered; the sequence is MAQKKGGGSTRNGRDSQPKM.

It belongs to the bacterial ribosomal protein bL27 family.

The sequence is that of Large ribosomal subunit protein bL27 from Methylibium petroleiphilum (strain ATCC BAA-1232 / LMG 22953 / PM1).